Reading from the N-terminus, the 135-residue chain is uncharacterized protein (135 aa).

Residues 35-55 (VVLVLIGATIILVVISVLVVS) traverse the membrane as a helical segment.

The protein localises to the membrane. This is an uncharacterized protein from Saccharomyces cerevisiae (strain ATCC 204508 / S288c) (Baker's yeast).